We begin with the raw amino-acid sequence, 404 residues long: S-adenosylmethionine synthase (404 aa).

141 to 146 (GQGSVD) contacts ATP.

The protein belongs to the AdoMet synthase 2 family. Mg(2+) serves as cofactor.

It carries out the reaction L-methionine + ATP + H2O = S-adenosyl-L-methionine + phosphate + diphosphate. It participates in amino-acid biosynthesis; S-adenosyl-L-methionine biosynthesis; S-adenosyl-L-methionine from L-methionine: step 1/1. In terms of biological role, catalyzes the formation of S-adenosylmethionine from methionine and ATP. The sequence is that of S-adenosylmethionine synthase from Methanococcus vannielii (strain ATCC 35089 / DSM 1224 / JCM 13029 / OCM 148 / SB).